The primary structure comprises 713 residues: Transcription activator of gluconeogenesis CPC735_053490 (713 aa).

The disordered stretch occupies residues 1–70 (MTANAINGPV…NAKDPLRPRR (70 aa)). A compositionally biased stretch (polar residues) spans 19–56 (GDNNKSADTTMADQGTRPESQPQGQNNGAKPQNGQTKP). A DNA-binding region (zn(2)-C6 fungal-type) is located at residues 77-105 (CFACQRAHLTCGDERPCQRCIKRGIQNAC). The span at 145–159 (PLTRNGSNSKTNFYP) shows a compositional bias: polar residues. 4 disordered regions span residues 145–229 (PLTR…ASGQ), 274–318 (GAGE…LFGD), 541–564 (GGSSGAMSGVTSRGSFTPRTGMDI), and 623–665 (GTTS…QRKW). The span at 160-171 (QQQSSFNNFYQN) shows a compositional bias: low complexity. The segment covering 191-212 (FPSQSPVSPTFNMTANPAASGN) has biased composition (polar residues). Over residues 213–229 (QGLPSSLSASNSNASGQ) the composition is skewed to low complexity. Polar residues-rich tracts occupy residues 295 to 312 (SGTYTAGSNFGESPTGQP), 541 to 558 (GGSSGAMSGVTSRGSFTP), and 649 to 659 (GASNGQSQHSL).

Belongs to the ERT1/acuK family.

It localises to the nucleus. Functionally, transcription factor which regulates nonfermentable carbon utilization. Activator of gluconeogenetic genes. The protein is Transcription activator of gluconeogenesis CPC735_053490 of Coccidioides posadasii (strain C735) (Valley fever fungus).